The sequence spans 222 residues: Glutathione S-transferase alpha-4 (222 aa).

An N-acetylmethionine modification is found at methionine 1. A GST N-terminal domain is found at valine 3–glycine 83. Glutathione-binding positions include tyrosine 9, glutamine 54–valine 55, and glutamine 67–threonine 68. The region spanning aspartate 85–proline 208 is the GST C-terminal domain.

The protein belongs to the GST superfamily. Alpha family. As to quaternary structure, homodimer.

It localises to the cytoplasm. It carries out the reaction RX + glutathione = an S-substituted glutathione + a halide anion + H(+). Its function is as follows. Conjugation of reduced glutathione to a wide number of exogenous and endogenous hydrophobic electrophiles. In Rattus norvegicus (Rat), this protein is Glutathione S-transferase alpha-4 (Gsta4).